The sequence spans 704 residues: Elongation factor G (704 aa).

Residues 10–290 form the tr-type G domain; that stretch reads NKVRNIGIMA…AVVDFLPSPL (281 aa). GTP is bound by residues 19–26, 83–87, and 137–140; these read AHIDAGKT, DTPGH, and NKMD. Residues 293-313 form a disordered region; sequence PPMIGHDPRNEETEMTRKPST. The segment covering 298-313 has biased composition (basic and acidic residues); the sequence is HDPRNEETEMTRKPST.

This sequence belongs to the TRAFAC class translation factor GTPase superfamily. Classic translation factor GTPase family. EF-G/EF-2 subfamily.

It localises to the cytoplasm. Its function is as follows. Catalyzes the GTP-dependent ribosomal translocation step during translation elongation. During this step, the ribosome changes from the pre-translocational (PRE) to the post-translocational (POST) state as the newly formed A-site-bound peptidyl-tRNA and P-site-bound deacylated tRNA move to the P and E sites, respectively. Catalyzes the coordinated movement of the two tRNA molecules, the mRNA and conformational changes in the ribosome. This chain is Elongation factor G, found in Renibacterium salmoninarum (strain ATCC 33209 / DSM 20767 / JCM 11484 / NBRC 15589 / NCIMB 2235).